The following is a 229-amino-acid chain: UPF0758 protein Ppro_3582 (229 aa).

The interval 1 to 20 is disordered; sequence MCPGIREWPEDERPREKMLR. Positions 7 to 19 are enriched in basic and acidic residues; that stretch reads EWPEDERPREKML. In terms of domain architecture, MPN spans 107–229; that stretch reads RFTSPRQVFD…YLSFVERGVL (123 aa). His178, His180, and Asp191 together coordinate Zn(2+). A JAMM motif motif is present at residues 178-191; it reads HNHPTGDPTPSQED.

It belongs to the UPF0758 family.

The polypeptide is UPF0758 protein Ppro_3582 (Pelobacter propionicus (strain DSM 2379 / NBRC 103807 / OttBd1)).